Here is a 289-residue protein sequence, read N- to C-terminus: 4-diphosphocytidyl-2-C-methyl-D-erythritol kinase (289 aa).

The active site involves Lys11. 93 to 103 (PLAAGLAGGSA) is a binding site for ATP. Asp135 is an active-site residue.

It belongs to the GHMP kinase family. IspE subfamily.

The enzyme catalyses 4-CDP-2-C-methyl-D-erythritol + ATP = 4-CDP-2-C-methyl-D-erythritol 2-phosphate + ADP + H(+). The protein operates within isoprenoid biosynthesis; isopentenyl diphosphate biosynthesis via DXP pathway; isopentenyl diphosphate from 1-deoxy-D-xylulose 5-phosphate: step 3/6. In terms of biological role, catalyzes the phosphorylation of the position 2 hydroxy group of 4-diphosphocytidyl-2C-methyl-D-erythritol. The sequence is that of 4-diphosphocytidyl-2-C-methyl-D-erythritol kinase from Thermoanaerobacter pseudethanolicus (strain ATCC 33223 / 39E) (Clostridium thermohydrosulfuricum).